The sequence spans 940 residues: Phosphoenolpyruvate carboxylase (940 aa).

Active-site residues include His-138 and Lys-603.

Belongs to the PEPCase type 1 family. Mg(2+) is required as a cofactor.

It catalyses the reaction oxaloacetate + phosphate = phosphoenolpyruvate + hydrogencarbonate. Its function is as follows. Forms oxaloacetate, a four-carbon dicarboxylic acid source for the tricarboxylic acid cycle. The protein is Phosphoenolpyruvate carboxylase of Streptococcus thermophilus (strain ATCC BAA-250 / LMG 18311).